A 1085-amino-acid polypeptide reads, in one-letter code: Solute carrier family 12 member 4 (1085 aa).

Residues 1–119 (MPHFTVVPVD…RRAAKAPSMG (119 aa)) are Cytoplasmic-facing. Phosphoserine occurs at positions 24, 47, 81, and 88. A discontinuously helical membrane pass occupies residues 120–141 (TLMGVYLPCLQNIFGVILFLRL). K(+)-binding residues include Asn-131 and Ile-132. At 142-149 (TWMVGTAG) the chain is on the extracellular side. Residues 150 to 172 (VLQALLIVLICCCCTLLTAISMS) form a helical membrane-spanning segment. Residues 173-196 (AIATNGVVPAGGSYFMISRSLGPE) lie on the Cytoplasmic side of the membrane. A helical transmembrane segment spans residues 197 to 225 (FGGAVGLCFYLGTTFAAAMYILGAIEILL). Tyr-216 lines the K(+) pocket. At 226–248 (TYIAPPAAIFYPSGTHDMSSATL) the chain is on the extracellular side. A run of 2 helical transmembrane segments spans residues 249-271 (NNMR…VGVK) and 272-297 (YVNK…GGIK). Residues 298–419 (SIFDPPVFPV…LYVVADIATS (122 aa)) are Extracellular-facing. An intrachain disulfide couples Cys-308 to Cys-323. 3 N-linked (GlcNAc...) asparagine glycosylation sites follow: Asn-312, Asn-331, and Asn-347. Cys-343 and Cys-353 form a disulfide bridge. Residues 420 to 440 (FTVLVGIFFPSVTGIMAGSNR) traverse the membrane as a helical segment. K(+) is bound by residues Pro-429 and Thr-432. Chloride is bound by residues Gly-433, Ile-434, and Met-435. Residues 441–450 (SGDLRDAQKS) lie on the Cytoplasmic side of the membrane. Residues 451-473 (IPVGTILAIVTTSLVYFSSVILF) form a helical membrane-spanning segment. At 474–504 (GACIEGVVLRDKYGDGVSRNLVVGTLAWPSP) the chain is on the extracellular side. The chain crosses the membrane as a helical span at residues 505–531 (WVIVVGSFFSTCGAGLQSLTGAPRLLQ). Topologically, residues 532 to 554 (AIAKDNIIPFLRVFGHGKANGEP) are cytoplasmic. Helical transmembrane passes span 555–575 (TWAL…ASLD) and 576–598 (MVAP…ACAV). Tyr-589 is a chloride binding site. Over 599–612 (QTLLRTPNWRPRFK) the chain is Cytoplasmic. 2 helical membrane passes run 613-635 (YYHW…VSSW) and 636-651 (YYAL…IYKY). Residues 652-1085 (IEYQGAEKEW…GGREVITIYS (434 aa)) are Cytoplasmic-facing. Residues 665-681 (IRGLSLSAARYALLRLE) form a scissor helix region. ATP contacts are provided by Leu-697, Lys-699, Lys-707, Tyr-708, and Val-730. Ser-734 is modified (phosphoserine). ATP contacts are provided by Gly-794, Trp-795, and Tyr-797. Ser-916 and Ser-967 each carry phosphoserine. Thr-983 is subject to Phosphothreonine. A Phosphoserine modification is found at Ser-1050.

It belongs to the SLC12A transporter family. K/Cl co-transporter subfamily. In terms of assembly, homodimer; adopts a domain-swap conformation at the scissor helices connecting the transmembrane domain and C-terminal domain. Heterodimer with other K-Cl cotransporters. In terms of processing, phosphorylated, phosphorylation may regulate transporter activity. In terms of tissue distribution, detected in embryo, adult heart, erythrocytes, brain, kidney, stomach, ovary, testis and liver.

It localises to the cell membrane. The enzyme catalyses K(+)(in) + chloride(in) = K(+)(out) + chloride(out). Inhibited by WNK3. Mediates electroneutral potassium-chloride cotransport when activated by cell swelling. May contribute to cell volume homeostasis in single cells. May be involved in the regulation of basolateral Cl(-) exit in NaCl absorbing epithelia. The chain is Solute carrier family 12 member 4 (Slc12a4) from Mus musculus (Mouse).